A 154-amino-acid polypeptide reads, in one-letter code: UPF0225 protein Asuc_0343 (154 aa).

This sequence belongs to the UPF0225 family.

In Actinobacillus succinogenes (strain ATCC 55618 / DSM 22257 / CCUG 43843 / 130Z), this protein is UPF0225 protein Asuc_0343.